The chain runs to 165 residues: Anaerobic nitrite reductase GLB1 (165 aa).

The Globin domain occupies 12-162 (VFGEEQEALV…LVAAIKREMK (151 aa)). The short motif at 45 to 49 (EIAPS) is the Homodimerization element. Positions 55, 69, 73, 103, 107, and 108 each coordinate heme b. Positions 115-127 (DGHFEVTGFALLE) match the Homodimerization motif.

This sequence belongs to the plant globin family. In terms of assembly, homodimer. The cofactor is heme b. In vegetative but not in embryonic organs.

Its subcellular location is the cytoplasm. It localises to the nucleus. The catalysed reaction is Fe(III)-heme b-[protein] + nitric oxide + H2O = Fe(II)-heme b-[protein] + nitrite + 2 H(+). Functionally, phytoglobin that reduces nitrite to nitric oxide (NO) under anoxic conditions (e.g. during flooding or in waterlogged soil). May not function as an oxygen storage or transport protein. Has an unusually high affinity for O(2) through an hexacoordinate heme iron because of a very low dissociation constant. This chain is Anaerobic nitrite reductase GLB1 (HB), found in Zea mays subsp. parviglumis (Balsas teosinte).